Reading from the N-terminus, the 1281-residue chain is MVRKKNPPLRNVASEGEGQILEPIGTESKVSGKNKEFSADQMSENTDQSDAAELNHKEEHSLHVQDPSSSSKKDLKSAVLSEKAGFNYESPSKGGNFPSFPHDEVTDRNMLAFSSPAAGGVCEPLKSPQRAEADDPQDMACTPSGDSLETKEDQKMSPKATEETGQAQSGQANCQGLSPVSVASKNPQVPSDGGVRLNKSKTDLLVNDNPDPAPLSPELQDFKCNICGYGYYGNDPTDLIKHFRKYHLGLHNRTRQDAELDSKILALHNMVQFSHSKDFQKVNRSVFSGVLQDINSSRPVLLNGTYDVQVTSGGTFIGIGRKTPDCQGNTKYFRCKFCNFTYMGNSSTELEQHFLQTHPNKIKASLPSSEVAKPSEKNSNKSIPALQSSDSGDLGKWQDKITVKAGDDTPVGYSVPIKPLDSSRQNGTEATSYYWCKFCSFSCESSSSLKLLEHYGKQHGAVQSGGLNPELNDKLSRGSVINQNDLAKSSEGETMTKTDKSSSGAKKKDFSSKGAEDNMVTSYNCQFCDFRYSKSHGPDVIVVGPLLRHYQQLHNIHKCTIKHCPFCPRGLCSPEKHLGEITYPFACRKSNCSHCALLLLHLSPGAAGSSRVKHQCHQCSFTTPDVDVLLFHYESVHESQASDVKQEANHLQGSDGQQSVKESKEHSCTKCDFITQVEEEISRHYRRAHSCYKCRQCSFTAADTQSLLEHFNTVHCQEQDITTANGEEDGHAISTIKEEPKIDFRVYNLLTPDSKMGEPVSESVVKREKLEEKDGLKEKVWTESSSDDLRNVTWRGADILRGSPSYTQASLGLLTPVSGTQEQTKTLRDSPNVEAAHLARPIYGLAVETKGFLQGAPAGGEKSGALPQQYPASGENKSKDESQSLLRRRRGSGVFCANCLTTKTSLWRKNANGGYVCNACGLYQKLHSTPRPLNIIKQNNGEQIIRRRTRKRLNPEALQAEQLNKQQRGSNEEQVNGSPLERRSEDHLTESHQREIPLPSLSKYEAQGSLTKSHSAQQPVLVSQTLDIHKRMQPLHIQIKSPQESTGDPGNSSSVSEGKGSSERGSPIEKYMRPAKHPNYSPPGSPIEKYQYPLFGLPFVHNDFQSEADWLRFWSKYKLSVPGNPHYLSHVPGLPNPCQNYVPYPTFNLPPHFSAVGSDNDIPLDLAIKHSRPGPTANGASKEKTKAPPNVKNEGPLNVVKTEKVDRSTQDELSTKCVHCGIVFLDEVMYALHMSCHGDSGPFQCSICQHLCTDKYDFTTHIQRGLHRNNAQVEKNGKPKE.

The interval 1–198 is disordered; sequence MVRKKNPPLR…VPSDGGVRLN (198 aa). Residue Lys29 forms a Glycyl lysine isopeptide (Lys-Gly) (interchain with G-Cter in SUMO2) linkage. The span at 40-49 shows a compositional bias: polar residues; it reads DQMSENTDQS. Over residues 53-63 the composition is skewed to basic and acidic residues; sequence ELNHKEEHSLH. Lys76 participates in a covalent cross-link: Glycyl lysine isopeptide (Lys-Gly) (interchain with G-Cter in SUMO2). Phosphoserine is present on residues Ser90 and Ser127. Residues 148–162 are compositionally biased toward basic and acidic residues; the sequence is LETKEDQKMSPKATE. The segment covering 163–189 has biased composition (polar residues); that stretch reads ETGQAQSGQANCQGLSPVSVASKNPQV. Phosphoserine occurs at positions 178 and 216. A C2H2-type 1; atypical zinc finger spans residues 222–247; it reads FKCNICGYGYYGNDPTDLIKHFRKYH. Lys263 is covalently cross-linked (Glycyl lysine isopeptide (Lys-Gly) (interchain with G-Cter in SUMO2)). Residues 333-358 form a C2H2-type 2; atypical zinc finger; the sequence is FRCKFCNFTYMGNSSTELEQHFLQTH. Residues 365-394 are disordered; that stretch reads SLPSSEVAKPSEKNSNKSIPALQSSDSGDL. Residues 380 to 391 show a composition bias toward polar residues; sequence NKSIPALQSSDS. Residues Lys418, Lys457, Lys474, and Lys488 each participate in a glycyl lysine isopeptide (Lys-Gly) (interchain with G-Cter in SUMO2) cross-link. Positions 483-512 are disordered; the sequence is QNDLAKSSEGETMTKTDKSSSGAKKKDFSS. Residues 488-512 are compositionally biased toward basic and acidic residues; it reads KSSEGETMTKTDKSSSGAKKKDFSS. The segment at 614–637 adopts a C2H2-type 3; atypical zinc-finger fold; that stretch reads HQCHQCSFTTPDVDVLLFHYESVH. The segment at 635-819 is mediates interaction with GLI3; sequence SVHESQASDV…SLGLLTPVSG (185 aa). Lys645 is covalently cross-linked (Glycyl lysine isopeptide (Lys-Gly) (interchain with G-Cter in SUMO2)). 2 consecutive C2H2-type zinc fingers follow at residues 666–689 and 692–715; these read HSCT…RRAH and YKCR…NTVH. A Glycyl lysine isopeptide (Lys-Gly) (interchain with G-Cter in SUMO2) cross-link involves residue Lys737. Phosphothreonine is present on Thr751. A Glycyl lysine isopeptide (Lys-Gly) (interchain with G-Cter in SUMO2) cross-link involves residue Lys755. A Glycyl lysine isopeptide (Lys-Gly) (interchain with G-Cter in SUMO1); alternate cross-link involves residue Lys766. Residue Lys766 forms a Glycyl lysine isopeptide (Lys-Gly) (interchain with G-Cter in SUMO2); alternate linkage. Glycyl lysine isopeptide (Lys-Gly) (interchain with G-Cter in SUMO2) cross-links involve residues Lys825, Lys850, Lys877, and Lys879. A disordered region spans residues 856–887; sequence APAGGEKSGALPQQYPASGENKSKDESQSLLR. The GATA-type zinc finger occupies 896 to 920; the sequence is CANCLTTKTSLWRKNANGGYVCNAC. Residues Lys925, Lys937, and Lys965 each participate in a glycyl lysine isopeptide (Lys-Gly) (interchain with G-Cter in SUMO2) cross-link. The span at 961–977 shows a compositional bias: polar residues; it reads EQLNKQQRGSNEEQVNG. Residues 961–1000 form a disordered region; sequence EQLNKQQRGSNEEQVNGSPLERRSEDHLTESHQREIPLPS. Residue Ser978 is modified to Phosphoserine. Over residues 980–995 the composition is skewed to basic and acidic residues; sequence LERRSEDHLTESHQRE. The tract at residues 985–1184 is mediates interaction with RNF4; the sequence is EDHLTESHQR…PTANGASKEK (200 aa). Glycyl lysine isopeptide (Lys-Gly) (interchain with G-Cter in SUMO2) cross-links involve residues Lys1003, Lys1012, Lys1030, and Lys1040. The disordered stretch occupies residues 1039-1080; it reads IKSPQESTGDPGNSSSVSEGKGSSERGSPIEKYMRPAKHPNY. The span at 1040–1049 shows a compositional bias: polar residues; the sequence is KSPQESTGDP. Position 1041 is a phosphoserine (Ser1041). Low complexity predominate over residues 1050–1059; that stretch reads GNSSSVSEGK. Basic and acidic residues predominate over residues 1060 to 1072; that stretch reads GSSERGSPIEKYM. Ser1066 bears the Phosphoserine mark. Lys1070 participates in a covalent cross-link: Glycyl lysine isopeptide (Lys-Gly) (interchain with G-Cter in SUMO2). Residue Ser1085 is modified to Phosphoserine. Positions 1163 to 1281 are transcriptional repressor domain; that stretch reads PLDLAIKHSR…QVEKNGKPKE (119 aa). Residues 1168–1196 form a disordered region; that stretch reads IKHSRPGPTANGASKEKTKAPPNVKNEGP. Residues Lys1192 and Lys1201 each participate in a glycyl lysine isopeptide (Lys-Gly) (interchain with G-Cter in SUMO2); alternate cross-link. Glycyl lysine isopeptide (Lys-Gly) (interchain with G-Cter in SUMO); alternate cross-links involve residues Lys1192 and Lys1201. Lys1201 is covalently cross-linked (Glycyl lysine isopeptide (Lys-Gly) (interchain with G-Cter in SUMO1); alternate). 2 C2H2-type zinc fingers span residues 1215–1237 and 1243–1267; these read TKCV…MSCH and FQCS…RGLH.

As to quaternary structure, interacts with RNF4; regulates TRPS1 repressor activity. Interacts specifically with the activator form of GLI3 (GLI3A) but not with the repressor form (GLI3R). Sumoylated. Sumoylation in the repressor domain inhibits the transcription repression activity. Sumoylation on Lys-1201 is the major site. Appears to be sumoylated on multiple sites. As to expression, ubiquitously expressed in the adult. Found in fetal brain, lung, kidney, liver, spleen and thymus. More highly expressed in androgen-dependent than in androgen-independent prostate cancer cells.

It is found in the nucleus. In terms of biological role, transcriptional repressor. Binds specifically to GATA sequences and represses expression of GATA-regulated genes at selected sites and stages in vertebrate development. Regulates chondrocyte proliferation and differentiation. Executes multiple functions in proliferating chondrocytes, expanding the region of distal chondrocytes, activating proliferation in columnar cells and supporting the differentiation of columnar into hypertrophic chondrocytes. This chain is Zinc finger transcription factor Trps1 (TRPS1), found in Homo sapiens (Human).